A 467-amino-acid chain; its full sequence is Transcription factor fos-1 (467 aa).

Residues 1–22 are compositionally biased toward low complexity; that stretch reads MFEQPSSTTNTTTSSGSGSDSN. 2 disordered regions span residues 1–38 and 139–179; these read MFEQPSSTTNTTTSSGSGSDSNHYFELGPRNPINQAHP and QYST…AAAR. Residues 163 to 226 enclose the bZIP domain; sequence DDKRLKRRQR…NSLKNYLETH (64 aa). Positions 165-205 are basic motif; it reads KRLKRRQRNKEAAARCRQRRIDLMKELQDQVNDFKNSNDKK. The interval 212–219 is leucine-zipper; that stretch reads IRNKLNSL. Disordered regions lie at residues 266–291 and 395–467; these read RADSVPYSIRSGHSSSSSEQHSPVED and QPIT…LRPL. A compositionally biased stretch (low complexity) spans 273–286; sequence SIRSGHSSSSSEQH. Polar residues predominate over residues 434–454; that stretch reads SSNTGLTPSGQPTMNFVSTPT. A phosphothreonine mark is found at Thr-440, Thr-452, and Thr-454.

The protein belongs to the bZIP family. Fos subfamily. Homodimer. Heterodimer; with jun-1. Interacts with kgb-1 and hda-1. May be phosphorylated by kgb-1. Phosphorylation at Thr-440 increases sensitivity to heavy metal stress. Phosphorylation inhibits homodimer formation, and promotes association with target promoters. Expressed in anchor cells. Isoform a is expressed in somatic gonad cells that neighbor anchor cells. Isoform b is expressed in vulval cells, the uterine cells that neighbor anchor cells and the spermatheca.

The protein resides in the nucleus. Its function is as follows. Developmentally regulated transcription factor which binds and recognizes the enhancer DNA sequence 5'-TGA[CG]TCA-3'. In terms of biological role, plays a role the development of the reproductive system, controlling events including anchor cell (AC) fusion and invasion. Regulates downstream transcriptional targets, including zmp-1, cdh-3, him-4 and mig10b, to promote the removal of the gonadal basement membrane during AC invasion. Regulates aff-1 expression to promote AC fusion. With jun-1 regulates egl-1 and lin-12 expression to allow uterine cell specification and development. Required for ovulation. Controls plc-1 expression in the spermatheca to regulate spermathecal valve dilation. Acts with hda-1 as a downstream repressor of the kgb-1 mediated stress response pathway that transcriptionally represses genes involved in the response to heavy metals, such as kreg-1. The chain is Transcription factor fos-1 from Caenorhabditis elegans.